Here is a 238-residue protein sequence, read N- to C-terminus: MTPHINAPEGAFADVVLMPGDPLRAKYIAETFLQDVVEVTNVRNMLGFTGTYKGRKISIMGHGMGIPSCSIYAKELITEYGVKKIIRVGSCGTVRMDVKVRDVIIGLGACTDSKVNRIRFKDNDFAAIADFDMAQAAVQAAKAKGKAVRVGNLFSADLFYTPDVEMFDVMEKYGILGVEMEAAGIYGVAAEYGAKALTICTVSDHIRTHEQTTAEERQLTFNDMIEIALDSVLIGDAQ.

Position 4 (His4) interacts with a purine D-ribonucleoside. Residues Gly20, Arg24, Arg43, and 87–90 (RVGS) each bind phosphate. Residues 179-181 (EME) and 203-204 (SD) each bind a purine D-ribonucleoside. Asp204 (proton donor) is an active-site residue.

Belongs to the PNP/UDP phosphorylase family. As to quaternary structure, homohexamer; trimer of homodimers.

The enzyme catalyses a purine D-ribonucleoside + phosphate = a purine nucleobase + alpha-D-ribose 1-phosphate. The catalysed reaction is a purine 2'-deoxy-D-ribonucleoside + phosphate = a purine nucleobase + 2-deoxy-alpha-D-ribose 1-phosphate. Functionally, catalyzes the reversible phosphorolytic breakdown of the N-glycosidic bond in the beta-(deoxy)ribonucleoside molecules, with the formation of the corresponding free purine bases and pentose-1-phosphate. The chain is Purine nucleoside phosphorylase DeoD-type from Haemophilus influenzae (strain PittGG).